Consider the following 93-residue polypeptide: UPF0728 protein C10orf53 homolog (93 aa).

The protein belongs to the UPF0728 family.

This Mus musculus (Mouse) protein is UPF0728 protein C10orf53 homolog.